The primary structure comprises 199 residues: 3-isopropylmalate dehydratase small subunit (199 aa).

This sequence belongs to the LeuD family. LeuD type 1 subfamily. As to quaternary structure, heterodimer of LeuC and LeuD.

The enzyme catalyses (2R,3S)-3-isopropylmalate = (2S)-2-isopropylmalate. The protein operates within amino-acid biosynthesis; L-leucine biosynthesis; L-leucine from 3-methyl-2-oxobutanoate: step 2/4. Catalyzes the isomerization between 2-isopropylmalate and 3-isopropylmalate, via the formation of 2-isopropylmaleate. The polypeptide is 3-isopropylmalate dehydratase small subunit (Bacillus licheniformis (strain ATCC 14580 / DSM 13 / JCM 2505 / CCUG 7422 / NBRC 12200 / NCIMB 9375 / NCTC 10341 / NRRL NRS-1264 / Gibson 46)).